The sequence spans 432 residues: Enolase (432 aa).

Residue Q163 coordinates (2R)-2-phosphoglycerate. The active-site Proton donor is E205. Mg(2+) contacts are provided by D242, E285, and D312. The (2R)-2-phosphoglycerate site is built by K337, R366, S367, and K388. K337 (proton acceptor) is an active-site residue.

Belongs to the enolase family. Mg(2+) serves as cofactor.

The protein localises to the cytoplasm. It is found in the secreted. Its subcellular location is the cell surface. It carries out the reaction (2R)-2-phosphoglycerate = phosphoenolpyruvate + H2O. It participates in carbohydrate degradation; glycolysis; pyruvate from D-glyceraldehyde 3-phosphate: step 4/5. In terms of biological role, catalyzes the reversible conversion of 2-phosphoglycerate (2-PG) into phosphoenolpyruvate (PEP). It is essential for the degradation of carbohydrates via glycolysis. This chain is Enolase, found in Desulfovibrio desulfuricans (strain ATCC 27774 / DSM 6949 / MB).